A 109-amino-acid polypeptide reads, in one-letter code: Non-structural protein of 12.7 kDa (109 aa).

Belongs to the coronaviruses ns12.7 protein family.

The protein is Non-structural protein of 12.7 kDa of Sus scrofa (Pig).